Here is a 221-residue protein sequence, read N- to C-terminus: Interleukin-12 subunit alpha (221 aa).

The signal sequence occupies residues 1-25 (MCPLRSLLLISTLVLLHHLPHLSLG). Disulfide bonds link cysteine 39–cysteine 112, cysteine 66–cysteine 198, and cysteine 87–cysteine 125. N-linked (GlcNAc...) asparagine glycosylation occurs at asparagine 95.

Belongs to the IL-6 superfamily. Heterodimer with IL12B; disulfide-linked. This heterodimer is known as interleukin IL-12. Heterodimer with EBI3/IL27B; not disulfide-linked. This heterodimer is known as interleukin IL-35. Interacts with NBR1; this interaction promotes IL-12 secretion.

Its subcellular location is the secreted. Heterodimerizes with IL12B to form the IL-12 cytokine or with EBI3/IL27B to form the IL-35 cytokine. IL-12 is primarily produced by professional antigen-presenting cells (APCs) such as B-cells and dendritic cells (DCs) as well as macrophages and granulocytes and regulates T-cell and natural killer-cell responses, induces the production of interferon-gamma (IFN-gamma), favors the differentiation of T-helper 1 (Th1) cells and is an important link between innate resistance and adaptive immunity. Mechanistically, exerts its biological effects through a receptor composed of IL12R1 and IL12R2 subunits. Binding to the receptor results in the rapid tyrosine phosphorylation of a number of cellular substrates including the JAK family kinases TYK2 and JAK2. In turn, recruited STAT4 gets phosphorylated and translocates to the nucleus where it regulates cytokine/growth factor responsive genes. As part of IL-35, plays essential roles in maintaining the immune homeostasis of the liver microenvironment and also functions as an immune-suppressive cytokine. Mediates biological events through unconventional receptors composed of IL12RB2 and gp130/IL6ST heterodimers or homodimers. Signaling requires the transcription factors STAT1 and STAT4, which form a unique heterodimer that binds to distinct DNA sites. The sequence is that of Interleukin-12 subunit alpha (IL12A) from Bos taurus (Bovine).